Here is a 58-residue protein sequence, read N- to C-terminus: KappaPI-actitoxin-Avd3b (58 aa).

Positions 5–55 (CLLPMDVGRCRASHPRYYYNSSSKRCEKFIYGGCRGNANNFHTLEECEKVC) constitute a BPTI/Kunitz inhibitor domain. 3 disulfide bridges follow: Cys-5-Cys-55, Cys-14-Cys-38, and Cys-30-Cys-51.

It belongs to the venom Kunitz-type family. Sea anemone type 2 potassium channel toxin subfamily.

It is found in the secreted. It localises to the nematocyst. Functionally, dual-function toxin that inhibits both the serine protease trypsin (Kd&lt;30 nM) and voltage-gated potassium channels Kv1.2/KCNA2 (IC(50)=2800 nM). This chain is KappaPI-actitoxin-Avd3b, found in Anemonia sulcata (Mediterranean snakelocks sea anemone).